The following is a 396-amino-acid chain: OTU domain-containing protein 3 (396 aa).

The segment at 1–49 is disordered; it reads MSRKQAAKSRPGSGGRRAEAERKRDERAARRALAKERRNRPDPGGSGCE. Over residues 16–41 the composition is skewed to basic and acidic residues; that stretch reads RRAEAERKRDERAARRALAKERRNRP. Positions 64 to 188 constitute an OTU domain; sequence LKLREVPGDG…GEHYDSVRRI (125 aa). N6-acetyllysine is present on Lys65. The tract at residues 69-75 is cys-loop; the sequence is VPGDGNC. The active site involves Asp72. The active-site Nucleophile is Cys75. N6-acetyllysine occurs at positions 121 and 128. The variable-loop stretch occupies residues 126–136; the sequence is LSKPGTFAGND. Residues 176–181 form a his-loop region; it reads YRYGEH. His181 is a catalytic residue. Position 219 is an N6-acetyllysine (Lys219). A UBA-like domain is found at 229–269; it reads DDVEDAVHKVGSATGCTDFNLIVQNLEAENYNIKSAITALL. Positions 275-381 are disordered; that stretch reads TGNDAEENHE…RDTGRSEADM (107 aa). Basic and acidic residues-rich tracts occupy residues 280–301, 312–331, and 343–379; these read EENH…EAGS, NEGR…ESKA, and QRRE…RSEA. At Lys290 the chain carries N6-acetyllysine.

In terms of processing, glucose and fatty acids stimulate CREBBP-dependent acetylation, promoting its nuclear translocation.

The protein localises to the cytoplasm. The protein resides in the nucleus. The enzyme catalyses Thiol-dependent hydrolysis of ester, thioester, amide, peptide and isopeptide bonds formed by the C-terminal Gly of ubiquitin (a 76-residue protein attached to proteins as an intracellular targeting signal).. Functionally, deubiquitinating enzyme that hydrolyzes 'Lys-6'- and 'Lys-11'-linked polyubiquitin. Also hydrolyzes heterotypic (mixed and branched) and homotypic chains. Important regulator of energy metabolism. Glucose and fatty acids trigger its nuclear translocation by CBP-dependent acetylation. In the nucleus, deubiquitinates and stabilizes the nuclear receptor PPARD regulating the expression of various genes involved in glucose and lipid metabolism and oxidative phosphorylation. Also acts as a negative regulator of the ribosome quality control (RQC) by mediating deubiquitination of 40S ribosomal proteins RPS10/eS10 and RPS20/uS10, thereby antagonizing ZNF598-mediated 40S ubiquitination. The sequence is that of OTU domain-containing protein 3 (Otud3) from Mus musculus (Mouse).